A 2113-amino-acid chain; its full sequence is Unconventional myosin-VIIb (2113 aa).

One can recognise a Myosin motor domain in the interval 65–760 (QGVDDMIRLG…QDTVLEIRRS (696 aa)). 158–165 (GESGAGKT) serves as a coordination point for ATP. Positions 637 to 659 (LDQLMRILTNCQPYFVRCIKPNE) are actin-binding. 6 consecutive IQ domains span residues 745-765 (IFLK…ALDG), 763-792 (LDGA…AAVT), 786-815 (QRRA…GFER), 809-838 (ILVG…RIVQ), 832-861 (MRQR…AVVI), and 855-884 (KRRA…TGPQ). Serine 904 carries the post-translational modification Phosphoserine. Positions 962–1578 (EEEVDSLAEY…STQLLSLLAM (617 aa)) are mediates interaction with ANKS4B. Residues 989 to 1189 (HIQKPLRYPL…PTWLELQAVK (201 aa)) form the MyTH4 1 domain. Residues 1194–1503 (IPIQVILATG…GGLKERSVFA (310 aa)) enclose the FERM 1 domain. The residue at position 1339 (threonine 1339) is a Phosphothreonine. Serine 1368 carries the post-translational modification Phosphoserine. The interval 1497–2113 (KERSVFAMAL…GFRAPAPANP (617 aa)) is mediates interaction with CDHR2, CDHR5 and USH1C. Residues 1498-1564 (ERSVFAMALQ…PTACLYTIPS (67 aa)) form the SH3 domain. 2 MyTH4 domains span residues 1641–1790 (YSPE…KAAE) and 1790–1896 (EQNV…LNVT). Residue serine 1642 is modified to Phosphoserine. In terms of domain architecture, FERM 2 spans 1796–2099 (LHHEVYLPND…SYVQQLLNTV (304 aa)).

Belongs to the TRAFAC class myosin-kinesin ATPase superfamily. Myosin family. Part of the IMAC/intermicrovillar adhesion complex/intermicrovillar tip-link complex composed of ANKS4B, MYO7B, USH1C, CDHR2 and CDHR5. Interacts with CDHR2. Interacts with CDHR5. Interacts with USH1C. Interacts with ANKS4B; requires initial interaction with USH1C. Interacts with CALML4; the interaction mediates the association of CALML4 with the IMAC/intermicrovillar adhesion complex. In terms of tissue distribution, expressed primarily in kidney and intestine. Detected in proximal tubule cells of the kidney and enterocytes of the intestine, specifically the distal tips of apical microvilli on these transporting epithelial cells (at protein level).

It localises to the cytoplasm. The protein resides in the cytoskeleton. The protein localises to the cell projection. It is found in the microvillus. Myosins are actin-based motor molecules with ATPase activity. Their highly divergent tails are presumed to bind to membranous compartments, which would be moved relative to actin filaments. As part of the intermicrovillar adhesion complex/IMAC plays a role in epithelial brush border differentiation, controlling microvilli organization and length. May link the complex to the actin core bundle of microvilli. This is Unconventional myosin-VIIb (Myo7b) from Mus musculus (Mouse).